Here is a 196-residue protein sequence, read N- to C-terminus: Adenylate kinase (196 aa).

Residue 9–17 coordinates ATP; sequence GIPGVGKST.

It belongs to the archaeal adenylate kinase family.

Its subcellular location is the cytoplasm. The enzyme catalyses AMP + ATP = 2 ADP. This is Adenylate kinase from Thermococcus kodakarensis (strain ATCC BAA-918 / JCM 12380 / KOD1) (Pyrococcus kodakaraensis (strain KOD1)).